The chain runs to 120 residues: UPF0231 protein YacL (120 aa).

This sequence belongs to the UPF0231 family.

The polypeptide is UPF0231 protein YacL (Escherichia coli O139:H28 (strain E24377A / ETEC)).